A 212-amino-acid chain; its full sequence is Adenylate kinase (212 aa).

10 to 15 contacts ATP; the sequence is GAGKGT. An NMP region spans residues 30–59; the sequence is STGDMFRAAMANQTEMGRLAKSYIDKGELV. Residues Thr-31, Arg-36, 57–59, 86–89, and Gln-93 each bind AMP; these read ELV and GYPR. An LID region spans residues 127-159; the sequence is GRIINRKTGETFHKVFNPPVDYKEEDYYQREDD. ATP is bound by residues Arg-128 and 137–138; that span reads TF. AMP is bound by residues Arg-156 and Arg-167. Position 195 (Gln-195) interacts with ATP.

The protein belongs to the adenylate kinase family. Monomer.

The protein localises to the cytoplasm. It carries out the reaction AMP + ATP = 2 ADP. The protein operates within purine metabolism; AMP biosynthesis via salvage pathway; AMP from ADP: step 1/1. Catalyzes the reversible transfer of the terminal phosphate group between ATP and AMP. Plays an important role in cellular energy homeostasis and in adenine nucleotide metabolism. In Streptococcus agalactiae serotype Ia (strain ATCC 27591 / A909 / CDC SS700), this protein is Adenylate kinase.